A 525-amino-acid polypeptide reads, in one-letter code: DNA damage-binding protein CMR1 (525 aa).

Disordered stretches follow at residues 38 to 86 and 212 to 233; these read AGIF…AESE and GILD…EYPD. Over residues 53–62 the composition is skewed to basic residues; it reads TKKKPAPKRV. WD repeat units lie at residues 183 to 224, 241 to 281, 288 to 328, 339 to 379, 384 to 425, 448 to 491, and 494 to 525; these read ITRE…DQNE, PHTN…ATEA, SDDE…KANP, LSEK…TKHP, EHES…KDWK, GKWV…LAQL, and DVIT…CLWM. Positions 223 to 232 are enriched in acidic residues; it reads NESDEEDEYP.

This sequence belongs to the WD repeat DDB2/WDR76 family.

DNA-binding protein that binds to both single- and double-stranded DNA. Binds preferentially to UV-damaged DNA. May be involved in DNA-metabolic processes. In Coccidioides immitis (strain RS) (Valley fever fungus), this protein is DNA damage-binding protein CMR1.